The sequence spans 666 residues: MEGVSALLARCPTAGLAGGLGVTACAAAGVLLYRIARRMKPTHTMVNCWFCNQDTLVPYGNRNCWDCPHCEQYNGFQENGDYNKPIPAQYLEHLNHVVSSAPSLRDPSQPQQWVSSQVLLCKRCNHHQTTKIKQLAAFAPREEGRYDEEVEVYRHHLEQMYKLCRPCQAAVEYYIKHQNRQLRALLLSHQFKRREADQTHAQNFSSAVKSPVQVILLRALAFLACAFLLTTALYGASGHFAPGTTVPLALPPGGNGSATPDNGTTPGAEGWRQLLGLLPEHMAEKLCEAWAFGQSHQTGVVALGLLTCLLAMLLAGRIRLRRIDAFCTCLWALLLGLHLAEQHLQAASPSWLDTLKFSTTSLCCLVGFTAAVATRKATGPRRFRPRRFFPGDSAGLFPTSPSLAIPHPSVGGSPASLFIPSPPSFLPLANQQLFRSPRRTSPSSLPGRLSRALSLGTIPSLTRADSGYLFSGSRPPSQVSRSGEFPVSDYFSLLSGSCPSSPLPSPAPSVAGSVASSSGSLRHRRPLISPARLNLKGQKLLLFPSPPGEAPTTPSSSDEHSPHNGSLFTMEPPHVPRKPPLQDVKHALDLRSKLERGSACSNRSIKKEDDSSQSSTCVVDTTTRGCSEEAATWRGRFGPSLVRGLLAVSLAANALFTSVFLYQSLR.

N-acetylmethionine is present on Met1. At 1 to 213 (MEGVSALLAR…FSSAVKSPVQ (213 aa)) the chain is on the nuclear side. The helical transmembrane segment at 214–234 (VILLRALAFLACAFLLTTALY) threads the bilayer. At 235-297 (GASGHFAPGT…EAWAFGQSHQ (63 aa)) the chain is on the perinuclear space side. Residues 298-318 (TGVVALGLLTCLLAMLLAGRI) form a helical membrane-spanning segment. Residues 319–322 (RLRR) are Nuclear-facing. A helical transmembrane segment spans residues 323–343 (IDAFCTCLWALLLGLHLAEQH). The Perinuclear space portion of the chain corresponds to 344–356 (LQAASPSWLDTLK). A helical transmembrane segment spans residues 357-374 (FSTTSLCCLVGFTAAVAT). At 375–644 (RKATGPRRFR…GRFGPSLVRG (270 aa)) the chain is on the nuclear side. Phosphoserine is present on residues Ser441, Ser444, Ser450, Ser454, Ser466, Ser477, and Ser480. The interval 502-581 (PLPSPAPSVA…PPHVPRKPPL (80 aa)) is disordered. Positions 508 to 520 (PSVAGSVASSSGS) are enriched in low complexity. Ser529 carries the post-translational modification Phosphoserine. The chain crosses the membrane as a helical span at residues 645–665 (LLAVSLAANALFTSVFLYQSL). A topological domain (perinuclear space) is located at residue Arg666.

It belongs to the TMEM201 family. As to quaternary structure, interacts with SUN2 and LMNA. May bind to Ran GTPase; has a greater affinity for Ran-GTP over Ran-GDP. In terms of assembly, interacts with EMD.

It localises to the nucleus inner membrane. The protein localises to the cytoplasm. It is found in the cytoskeleton. Its subcellular location is the spindle pole. In terms of biological role, critical regulator of angiogenesis and endothelial cell (EC) migration. Promotes the migration of endothelial cells, which is essential for angiogenesis. Interacts with the linker of nucleoskeleton and cytoskeleton (LINC) complex, which plays a vital role in connecting the cell's cytoskeleton to the nuclear envelope. This interaction is essential for maintaining cellular structure and facilitating the movement of endothelial cells, which is critical for proper vascular development. Involved in nuclear movement during fibroblast polarization and migration. Overexpression can recruit Ran GTPase to the nuclear periphery. Functionally, may define a distinct membrane domain in the vicinity of the mitotic spindle. Involved in the organization of the nuclear envelope implicating EMD, SUN1 and A-type lamina. The polypeptide is Transmembrane protein 201 (TMEM201) (Homo sapiens (Human)).